A 222-amino-acid polypeptide reads, in one-letter code: Protein-L-isoaspartate O-methyltransferase (222 aa).

Serine 73 is an active-site residue.

Belongs to the methyltransferase superfamily. L-isoaspartyl/D-aspartyl protein methyltransferase family.

The protein resides in the cytoplasm. The catalysed reaction is [protein]-L-isoaspartate + S-adenosyl-L-methionine = [protein]-L-isoaspartate alpha-methyl ester + S-adenosyl-L-homocysteine. In terms of biological role, catalyzes the methyl esterification of L-isoaspartyl residues in peptides and proteins that result from spontaneous decomposition of normal L-aspartyl and L-asparaginyl residues. It plays a role in the repair and/or degradation of damaged proteins. The sequence is that of Protein-L-isoaspartate O-methyltransferase from Chromobacterium violaceum (strain ATCC 12472 / DSM 30191 / JCM 1249 / CCUG 213 / NBRC 12614 / NCIMB 9131 / NCTC 9757 / MK).